Here is a 103-residue protein sequence, read N- to C-terminus: Large ribosomal subunit protein eL14 (103 aa).

It belongs to the eukaryotic ribosomal protein eL14 family.

This chain is Large ribosomal subunit protein eL14, found in Pyrobaculum neutrophilum (strain DSM 2338 / JCM 9278 / NBRC 100436 / V24Sta) (Thermoproteus neutrophilus).